Reading from the N-terminus, the 303-residue chain is tRNA dimethylallyltransferase (303 aa).

10 to 17 is an ATP binding site; that stretch reads GPTASGKS. 12–17 contacts substrate; it reads TASGKS. Residues 35-38 are interaction with substrate tRNA; sequence DSMQ.

The protein belongs to the IPP transferase family. Monomer. Requires Mg(2+) as cofactor.

The catalysed reaction is adenosine(37) in tRNA + dimethylallyl diphosphate = N(6)-dimethylallyladenosine(37) in tRNA + diphosphate. Functionally, catalyzes the transfer of a dimethylallyl group onto the adenine at position 37 in tRNAs that read codons beginning with uridine, leading to the formation of N6-(dimethylallyl)adenosine (i(6)A). In Methylobacterium nodulans (strain LMG 21967 / CNCM I-2342 / ORS 2060), this protein is tRNA dimethylallyltransferase.